The primary structure comprises 430 residues: Probable beta-1,3-galactosyl-O-glycosyl-glycoprotein beta-1,6-N-acetylglucosaminyltransferase 7 (430 aa).

Topologically, residues 1 to 8 (MSQLRATK) are cytoplasmic. Residues 9–25 (SGLVVRAVICIFIFLYL) form a helical; Signal-anchor for type II membrane protein membrane-spanning segment. Topologically, residues 26–430 (RNPTPAESEE…QSHFNMRLNR (405 aa)) are extracellular. 4 disulfides stabilise this stretch: cysteine 53–cysteine 205, cysteine 139–cysteine 354, cysteine 160–cysteine 187, and cysteine 363–cysteine 395. An N-linked (GlcNAc...) asparagine glycan is attached at asparagine 87. Asparagine 272 carries N-linked (GlcNAc...) asparagine glycosylation.

It belongs to the glycosyltransferase 14 family.

Its subcellular location is the golgi apparatus membrane. It participates in protein modification; protein glycosylation. In terms of biological role, probable glycosyltransferase. The sequence is that of Probable beta-1,3-galactosyl-O-glycosyl-glycoprotein beta-1,6-N-acetylglucosaminyltransferase 7 from Homo sapiens (Human).